The primary structure comprises 734 residues: Ribosomal RNA large subunit methyltransferase K/L (734 aa).

Residues 49–167 enclose the THUMP domain; the sequence is HAYRICMWSR…KTEHTYCLDL (119 aa).

The protein belongs to the methyltransferase superfamily. RlmKL family.

Its subcellular location is the cytoplasm. The enzyme catalyses guanosine(2445) in 23S rRNA + S-adenosyl-L-methionine = N(2)-methylguanosine(2445) in 23S rRNA + S-adenosyl-L-homocysteine + H(+). The catalysed reaction is guanosine(2069) in 23S rRNA + S-adenosyl-L-methionine = N(2)-methylguanosine(2069) in 23S rRNA + S-adenosyl-L-homocysteine + H(+). Its function is as follows. Specifically methylates the guanine in position 2445 (m2G2445) and the guanine in position 2069 (m7G2069) of 23S rRNA. This chain is Ribosomal RNA large subunit methyltransferase K/L, found in Acinetobacter baumannii (strain ACICU).